A 507-amino-acid chain; its full sequence is Beta-glucosidase 12 (507 aa).

An N-terminal signal peptide occupies residues 1 to 22 (MRTIYLSLLVFIIVLALNEVMA). A beta-D-glucoside is bound at residue glutamine 50. Asparagine 81 carries N-linked (GlcNAc...) asparagine glycosylation. A beta-D-glucoside-binding positions include histidine 154 and 199–200 (NE). The Proton donor role is filled by glutamate 200. The cysteines at positions 219 and 227 are disulfide-linked. The N-linked (GlcNAc...) asparagine glycan is linked to asparagine 226. Residue tyrosine 344 coordinates a beta-D-glucoside. Asparagine 358 carries an N-linked (GlcNAc...) asparagine glycan. A beta-D-glucoside-binding positions include glutamate 414, tryptophan 459, 466-467 (EW), and phenylalanine 475. Glutamate 414 functions as the Nucleophile in the catalytic mechanism.

The protein belongs to the glycosyl hydrolase 1 family.

It carries out the reaction Hydrolysis of terminal, non-reducing beta-D-glucosyl residues with release of beta-D-glucose.. This chain is Beta-glucosidase 12, found in Arabidopsis thaliana (Mouse-ear cress).